The chain runs to 218 residues: N-(5'-phosphoribosyl)anthranilate isomerase (218 aa).

This sequence belongs to the TrpF family.

It carries out the reaction N-(5-phospho-beta-D-ribosyl)anthranilate = 1-(2-carboxyphenylamino)-1-deoxy-D-ribulose 5-phosphate. The protein operates within amino-acid biosynthesis; L-tryptophan biosynthesis; L-tryptophan from chorismate: step 3/5. In Bacillus licheniformis (strain ATCC 14580 / DSM 13 / JCM 2505 / CCUG 7422 / NBRC 12200 / NCIMB 9375 / NCTC 10341 / NRRL NRS-1264 / Gibson 46), this protein is N-(5'-phosphoribosyl)anthranilate isomerase.